The primary structure comprises 461 residues: MLEIIKRLEYYAKVQPQSIALQIDDEIVNYENLYQKICDCTLNSPKFKLGCRVALLNDSPIVNITNYFVVLMMDGVPCFLDNKWSRDTIDKLIEHFHIEYVMTAIGKFKRTTSFGTYEKYISEQLKVDDLLHIGFTSGTTGLPKAYYRNEPSWIASYVENEKLIYNYEKALAAPGPLAHSLSLYTCIYALYSGRTFIGQRQFDAKRFISILNEQHSNIALFLVPTMLHQLLNVDTTITHIKSIFCSGAKLSESLFKTVSQQFKNANIIEFFGTSEASFITYNFNQTSPTNSVGQVFPNVSIKLEAQDNRKIGLLKVQSNMIYSGYVDVGVVQPHSWIETGDYAYIQNNQLYLVSRKSDRLIIGGKNIYPNVIEQQVKSLDGIEEAVVVGEPHRRFGEIAVLIYVGNQELDYTTLRRYLRQTLSRYEIPSKLVRVKDLPFTNSGKVARNTVQTLYLEGAFKV.

Belongs to the ATP-dependent AMP-binding enzyme family.

The protein is Putative long chain fatty acid-CoA ligase VraA (vraA) of Staphylococcus haemolyticus (strain JCSC1435).